The following is a 329-amino-acid chain: MSVIFSGIQPSGTITLGNYLGAMKQFTELQNEHDCYFCIVNQHAITVPQDPVQLRKNIRSLAALYVACGIDPEKATLFVQSEVPAHAQLGWIMQSVAYVGELERMTQYKDKASGRDSVPAGLLTYPPLMAADILLYNTEIVPVGDDQKQHMELTRDLAERFNKRFREVFTIPEIRIPKVGARVMSLTEPTKKMSKSDPNPKSMISMLDEPKTIEKKIKSAVTDSEGIVKFDKENKPGISNLLTIYSSFSGKTVEEIEAMYEGKGYGDFKGDLAQVVVEAIRPIQDKYNELINSPELDEILDKGAEKANRVAFKQLRKVENAMGLSRKRR.

ATP contacts are provided by residues 9–11 (QPS) and 17–18 (GN). The short motif at 10 to 18 (PSGTITLGN) is the 'HIGH' region element. Residue Asp-132 coordinates L-tryptophan. ATP is bound by residues 144 to 146 (GDD), Val-183, and 192 to 196 (KMSKS). Positions 192 to 196 (KMSKS) match the 'KMSKS' region motif.

Belongs to the class-I aminoacyl-tRNA synthetase family. As to quaternary structure, homodimer.

Its subcellular location is the cytoplasm. The catalysed reaction is tRNA(Trp) + L-tryptophan + ATP = L-tryptophyl-tRNA(Trp) + AMP + diphosphate + H(+). Functionally, catalyzes the attachment of tryptophan to tRNA(Trp). In Bacillus anthracis, this protein is Tryptophan--tRNA ligase.